The primary structure comprises 173 residues: Peptidoglycan-associated lipoprotein (173 aa).

The first 21 residues, 1 to 21 (MQLNKVLKGLMIALPVMAIAA), serve as a signal peptide directing secretion. The N-palmitoyl cysteine moiety is linked to residue Cys22. A lipid anchor (S-diacylglycerol cysteine) is attached at Cys22. The tract at residues 30 to 58 (NDGSEGMLGAGTGMDANGGNGNMSSEEQA) is disordered. Positions 35–50 (GMLGAGTGMDANGGNG) are enriched in gly residues. The region spanning 60 to 173 (LQMQQLQQNN…SKNRRAVLVY (114 aa)) is the OmpA-like domain.

The protein belongs to the Pal lipoprotein family. The Tol-Pal system is composed of five core proteins: the inner membrane proteins TolA, TolQ and TolR, the periplasmic protein TolB and the outer membrane protein Pal. They form a network linking the inner and outer membranes and the peptidoglycan layer.

It is found in the cell outer membrane. Part of the Tol-Pal system, which plays a role in outer membrane invagination during cell division and is important for maintaining outer membrane integrity. This is Peptidoglycan-associated lipoprotein from Escherichia coli O157:H7.